The sequence spans 263 residues: ATP synthase subunit a (263 aa).

The next 5 membrane-spanning stretches (helical) occupy residues Leu-31–Ile-51, Ile-89–Ile-109, Asp-133–Phe-153, Leu-205–Trp-225, and Ala-235–Val-255.

It belongs to the ATPase A chain family. In terms of assembly, F-type ATPases have 2 components, CF(1) - the catalytic core - and CF(0) - the membrane proton channel. CF(1) has five subunits: alpha(3), beta(3), gamma(1), delta(1), epsilon(1). CF(0) has three main subunits: a(1), b(2) and c(9-12). The alpha and beta chains form an alternating ring which encloses part of the gamma chain. CF(1) is attached to CF(0) by a central stalk formed by the gamma and epsilon chains, while a peripheral stalk is formed by the delta and b chains.

It is found in the cell inner membrane. Functionally, key component of the proton channel; it plays a direct role in the translocation of protons across the membrane. This chain is ATP synthase subunit a, found in Dichelobacter nodosus (strain VCS1703A).